The sequence spans 877 residues: Potassium transporter 23 (877 aa).

2 disordered regions span residues Met-1–Gly-60 and Ala-72–Ser-92. The Cytoplasmic segment spans residues Met-1 to Glu-126. The span at Pro-12–Leu-28 shows a compositional bias: pro residues. Over residues Gly-76–Pro-86 the composition is skewed to gly residues. A helical transmembrane segment spans residues Ile-127–Met-147. The Extracellular portion of the chain corresponds to Gly-148–Ala-173. The chain crosses the membrane as a helical span at residues Leu-174–Leu-194. Over Lys-195–Asn-260 the chain is Cytoplasmic. Residues Ile-261–Pro-281 traverse the membrane as a helical segment. Topologically, residues Ser-282–Arg-295 are extracellular. The helical transmembrane segment at Val-296 to Phe-316 threads the bilayer. The Cytoplasmic segment spans residues Ser-317–Lys-325. Residues Val-326 to Ile-346 form a helical membrane-spanning segment. Topologically, residues Tyr-347–Ala-379 are extracellular. The chain crosses the membrane as a helical span at residues Leu-380–Phe-400. The Cytoplasmic segment spans residues Ser-401 to Gln-406. A helical membrane pass occupies residues Val-407–Tyr-427. Topologically, residues Leu-428–Asp-441 are extracellular. Residues Ser-442–Ala-462 traverse the membrane as a helical segment. The Cytoplasmic portion of the chain corresponds to Ser-463–Gln-498. The chain crosses the membrane as a helical span at residues Ile-499 to Phe-519. Topologically, residues Arg-520 to Asp-524 are extracellular. Residues Ile-525 to Thr-545 form a helical membrane-spanning segment. Residues Leu-546–Asn-555 are Cytoplasmic-facing. The helical transmembrane segment at Leu-556–Leu-578 threads the bilayer. The Extracellular segment spans residues Ser-579–Glu-583. Residues Gly-584 to Tyr-604 form a helical membrane-spanning segment. Residues Gly-605 to Val-877 lie on the Cytoplasmic side of the membrane.

Belongs to the HAK/KUP transporter (TC 2.A.72.3) family.

Its subcellular location is the membrane. In terms of biological role, high-affinity potassium transporter. The chain is Potassium transporter 23 (HAK23) from Oryza sativa subsp. japonica (Rice).